The sequence spans 154 residues: Fibroblast growth factor 2 (154 aa).

Positions 1–9 are excised as a propeptide; the sequence is MAAGSITSL. Residues 1-20 are disordered; sequence MAAGSITSLPALPEDGGGAF. A heparin-binding site is contributed by Asn-35. Tyr-81 carries the post-translational modification Phosphotyrosine; by TEC. A Glycyl lysine isopeptide (Lys-Gly) (interchain with G-Cter in SUMO1) cross-link involves residue Lys-94. A heparin-binding region spans residues 127–143; sequence KRTGQYKLGSKTGPGQK.

Belongs to the heparin-binding growth factors family. In terms of assembly, monomer. Homodimer. Interacts with FGFR1, FGFR2, FGFR3 and FGFR4. Affinity between fibroblast growth factors (FGFs) and their receptors is increased by heparan sulfate glycosaminoglycans that function as coreceptors. Interacts with CSPG4, FGFBP1 and TEC. Found in a complex with FGFBP1, FGF1 and FGF2. Interacts with FGFBP3. Interacts with integrin ITGAV:ITGB3; the interaction is required for FGF2 signaling. Interacts with SNORC (via the extracellular domain). Interacts with GPC3. Post-translationally, phosphorylation at Tyr-81 regulates FGF2 unconventional secretion. Found in all tissues examined.

The protein localises to the secreted. It localises to the nucleus. Functionally, acts as a ligand for FGFR1, FGFR2, FGFR3 and FGFR4. Also acts as an integrin ligand which is required for FGF2 signaling. Binds to integrin ITGAV:ITGB3. Plays an important role in the regulation of cell survival, cell division, cell differentiation and cell migration. Functions as a potent mitogen in vitro. Can induce angiogenesis. Mediates phosphorylation of ERK1/2 and thereby promotes retinal lens fiber differentiation. This Rattus norvegicus (Rat) protein is Fibroblast growth factor 2 (Fgf2).